A 259-amino-acid polypeptide reads, in one-letter code: tRNA-cytidine(32) 2-sulfurtransferase (259 aa).

Positions Ser-40 to Ser-45 match the PP-loop motif motif. Positions 114, 117, and 205 each coordinate [4Fe-4S] cluster.

Belongs to the TtcA family. Homodimer. Mg(2+) is required as a cofactor. [4Fe-4S] cluster serves as cofactor.

It localises to the cytoplasm. It carries out the reaction cytidine(32) in tRNA + S-sulfanyl-L-cysteinyl-[cysteine desulfurase] + AH2 + ATP = 2-thiocytidine(32) in tRNA + L-cysteinyl-[cysteine desulfurase] + A + AMP + diphosphate + H(+). Its pathway is tRNA modification. Its function is as follows. Catalyzes the ATP-dependent 2-thiolation of cytidine in position 32 of tRNA, to form 2-thiocytidine (s(2)C32). The sulfur atoms are provided by the cysteine/cysteine desulfurase (IscS) system. This is tRNA-cytidine(32) 2-sulfurtransferase from Bdellovibrio bacteriovorus (strain ATCC 15356 / DSM 50701 / NCIMB 9529 / HD100).